The primary structure comprises 496 residues: Cytosol aminopeptidase (496 aa).

Lysine 258 and aspartate 263 together coordinate Mn(2+). Lysine 270 is an active-site residue. The Mn(2+) site is built by aspartate 281, aspartate 340, and glutamate 342. The active site involves arginine 344.

The protein belongs to the peptidase M17 family. It depends on Mn(2+) as a cofactor.

It localises to the cytoplasm. It catalyses the reaction Release of an N-terminal amino acid, Xaa-|-Yaa-, in which Xaa is preferably Leu, but may be other amino acids including Pro although not Arg or Lys, and Yaa may be Pro. Amino acid amides and methyl esters are also readily hydrolyzed, but rates on arylamides are exceedingly low.. The catalysed reaction is Release of an N-terminal amino acid, preferentially leucine, but not glutamic or aspartic acids.. Functionally, presumably involved in the processing and regular turnover of intracellular proteins. Catalyzes the removal of unsubstituted N-terminal amino acids from various peptides. This Helicobacter pylori (strain ATCC 700392 / 26695) (Campylobacter pylori) protein is Cytosol aminopeptidase (pepA).